A 239-amino-acid polypeptide reads, in one-letter code: MNKNIVIKSMAALAILTSVTGINAAVVEETQQIANAEKNVTQVKDTNIFPYNGVVSFKDATGFVIGKNTIITNKHVSKDYKVGDRITAHPDGDKGNGGIYKIKSISDYPGDEDISVMNIEEQAVERGPKGFNFNENVQALNFAKDAKVDDKIKVIGYPLPAQNSFKQFESTGTIKRIKDNILNFDAYIEPGNSGSPVLNSNNEVIGVVYGGIGKIGSEYNGAVYFTPQIKDFIQKHIEQ.

Residues Met1–Ala36 form the signal peptide. Catalysis depends on charge relay system residues His75, Asp113, and Ser193.

Belongs to the peptidase S1B family.

It is found in the secreted. In Staphylococcus aureus (strain MW2), this protein is Serine protease SplC (splC).